Consider the following 221-residue polypeptide: Vesicle-associated membrane protein 722 (221 aa).

Topologically, residues 1–196 (MAQQSLIYSF…MWFQNMKIKL (196 aa)) are cytoplasmic. The region spanning 10 to 114 (FVARGTVILV…SLNKEFGSKL (105 aa)) is the Longin domain. The v-SNARE coiled-coil homology domain maps to 130–190 (KLAKVKAQVS…TQMRRKMWFQ (61 aa)). A helical; Anchor for type IV membrane protein membrane pass occupies residues 197–217 (IVLAIIIALILIIILSICGGF). At 218–221 (NCGK) the chain is on the vesicular side.

The protein belongs to the synaptobrevin family. As to expression, highly expressed in stems and roots. Detected in flowers and leaves.

It localises to the cell membrane. Its subcellular location is the early endosome membrane. Its function is as follows. Involved in the targeting and/or fusion of transport vesicles to their target membrane. The protein is Vesicle-associated membrane protein 722 of Arabidopsis thaliana (Mouse-ear cress).